Reading from the N-terminus, the 202-residue chain is Dephospho-CoA kinase (202 aa).

Positions 6–202 constitute a DPCK domain; the sequence is KVSITGDLSS…EYFYALKGAL (197 aa). 14–19 lines the ATP pocket; the sequence is SSGKTE.

This sequence belongs to the CoaE family.

It is found in the cytoplasm. The catalysed reaction is 3'-dephospho-CoA + ATP = ADP + CoA + H(+). It functions in the pathway cofactor biosynthesis; coenzyme A biosynthesis; CoA from (R)-pantothenate: step 5/5. Its function is as follows. Catalyzes the phosphorylation of the 3'-hydroxyl group of dephosphocoenzyme A to form coenzyme A. The sequence is that of Dephospho-CoA kinase from Chlamydia caviae (strain ATCC VR-813 / DSM 19441 / 03DC25 / GPIC) (Chlamydophila caviae).